The primary structure comprises 175 residues: ATP synthase subunit b (175 aa).

The helical transmembrane segment at 14–34 (LNPNPGLIFWTALTFLIVLVI) threads the bilayer.

It belongs to the ATPase B chain family. In terms of assembly, F-type ATPases have 2 components, F(1) - the catalytic core - and F(0) - the membrane proton channel. F(1) has five subunits: alpha(3), beta(3), gamma(1), delta(1), epsilon(1). F(0) has four main subunits: a(1), b(2) and c(10-14). The alpha and beta chains form an alternating ring which encloses part of the gamma chain. F(1) is attached to F(0) by a central stalk formed by the gamma and epsilon chains, while a peripheral stalk is formed by the delta and b chains.

The protein localises to the cell inner membrane. F(1)F(0) ATP synthase produces ATP from ADP in the presence of a proton or sodium gradient. F-type ATPases consist of two structural domains, F(1) containing the extramembraneous catalytic core and F(0) containing the membrane proton channel, linked together by a central stalk and a peripheral stalk. During catalysis, ATP synthesis in the catalytic domain of F(1) is coupled via a rotary mechanism of the central stalk subunits to proton translocation. Functionally, component of the F(0) channel, it forms part of the peripheral stalk, linking F(1) to F(0). This is ATP synthase subunit b from Chlorobaculum tepidum (strain ATCC 49652 / DSM 12025 / NBRC 103806 / TLS) (Chlorobium tepidum).